The chain runs to 70 residues: DNA-directed RNA polymerase subunit omega (70 aa).

This sequence belongs to the RNA polymerase subunit omega family. As to quaternary structure, the RNAP catalytic core consists of 2 alpha, 1 beta, 1 beta' and 1 omega subunit. When a sigma factor is associated with the core the holoenzyme is formed, which can initiate transcription.

The catalysed reaction is RNA(n) + a ribonucleoside 5'-triphosphate = RNA(n+1) + diphosphate. Functionally, promotes RNA polymerase assembly. Latches the N- and C-terminal regions of the beta' subunit thereby facilitating its interaction with the beta and alpha subunits. In Staphylococcus epidermidis (strain ATCC 35984 / DSM 28319 / BCRC 17069 / CCUG 31568 / BM 3577 / RP62A), this protein is DNA-directed RNA polymerase subunit omega.